The chain runs to 252 residues: SPbeta prophage-derived uncharacterized protein YomH (252 aa).

The protein is SPbeta prophage-derived uncharacterized protein YomH (yomH) of Bacillus subtilis (strain 168).